Here is a 215-residue protein sequence, read N- to C-terminus: MNIIKPLTCILAMSISGLATAAVTLHVPDDVTLFVANGQKAKLSGSLFASSKTIELPNGENQIVFQYEPYFSQGNDRIGVESNVIIAKFSANDTDLNFELPKYRDHRVAEQEIKQMQWQLVDEQGAAVTKSEDKLVKSGMQIGRDYAREAADYNQTGGIAAIGTAVSVATIKTEPVADVETKVKAGDNTAEEMLHFWYDKADEATKARFKAYINQ.

The first 21 residues, M1 to A21, serve as a signal peptide directing secretion.

Belongs to the UPF0319 family.

The sequence is that of UPF0319 protein VVA1446 from Vibrio vulnificus (strain YJ016).